Consider the following 262-residue polypeptide: Small ribosomal subunit protein uS2 (262 aa).

It belongs to the universal ribosomal protein uS2 family.

This Rhodospirillum rubrum (strain ATCC 11170 / ATH 1.1.1 / DSM 467 / LMG 4362 / NCIMB 8255 / S1) protein is Small ribosomal subunit protein uS2.